Here is a 216-residue protein sequence, read N- to C-terminus: MASNKAFTLAVANLKGGCGKTTISTNISAGLTQRGRVGLVDADPQGALKHWVDWGSKEADAQVPVLYSDHTDPVQNLKLAQPNHDFVVVDCPPSLDMAITCQLMIECDFILIPVLPSPLDLWASTQTIEMIESARKTNPKLKAALVLNQTEPRSAMTRAMQTTIERLGVPVLTTSVRRRAVYRNAVVEGVSVFQLGARGRSAADEINQILNEVIPS.

Glycine 16, glycine 17, glycine 19, lysine 20, threonine 21, threonine 22, and glutamine 45 together coordinate ATP. Threonine 21 contacts Mg(2+).

The protein belongs to the ParA family. McdA subfamily. As to quaternary structure, self-associates, associates with McdB.

The protein localises to the cytoplasm. Its subcellular location is the nucleoid. The enzyme catalyses ATP + H2O = ADP + phosphate + H(+). Its function is as follows. McdA and McdB together mediate carboxysome positioning on the nucleoid and prevent their aggregation in the cell. McdA is an ATPase that forms dynamic gradients on the nucleoid in response to adapter protein McdB, which associates with carboxysomes. The interplay between McdA gradients on the nucleoid and McdB-bound carboxysomes result in the equal spacing of Cbs along the cell length. Incorrect positioning (aggregation) of carboxysomes results in reduced CO(2) fixation by encapsulated form 1 ribulose-1,5-bisphosphate carboxylase (RuBisCO, cbbL/cbbS), which leads to slower growth. This chain is Maintenance of carboxysome distribution protein A, found in Halothiobacillus neapolitanus (strain ATCC 23641 / c2) (Thiobacillus neapolitanus).